The primary structure comprises 358 residues: MPSTTLSTVLSDINDFVVKQGHGVKGLSELGLQTLPNQYVHPPEERLSSMDVVSDDSIPVIDVSNWEDPKVAKLICDAAEKRGFFQIVNHGIPIEMLEKAKAATYRFFREPAEEKKKYSKENCPTSHVRYSTSFLPQIEKALEWKDHLSMFYVSDEEAAQYWPPSCRDDAVEYLKSCEMVSRKLLEALMQGLNVNQIDDSKESLLMGSRRININYYPKCPNPDLTVGVGRHSDISTLTLLLQDDIGGLYVRKLEHEAWSHVPPVKGALVINIGDALQIMSNGRYKSIEHRVMANESNDRISVPVFVNPRPNDIVGPLPEVLASGEKPVYKPVLYSDYAKHFYRKAHNGKDTIAFARIE.

The Fe2OG dioxygenase domain occupies 200–308; that stretch reads SKESLLMGSR…RISVPVFVNP (109 aa). Tyr-216 provides a ligand contact to 2-oxoglutarate. His-231, Asp-233, and His-289 together coordinate Fe cation. Residues Arg-299 and Ser-301 each coordinate 2-oxoglutarate.

It belongs to the iron/ascorbate-dependent oxidoreductase family. L-ascorbate is required as a cofactor. It depends on Fe(2+) as a cofactor. Mostly expressed in underground stems and stems.

It catalyses the reaction (E)-4-coumaroyl-CoA + 2-oxoglutarate + O2 = (E)-2,4-dihydroxycinnamoyl-CoA + succinate + CO2. The catalysed reaction is (E)-feruloyl-CoA + 2-oxoglutarate + O2 = (E)-6-hydroxyferuloyl-CoA + succinate + CO2. The protein operates within phenylpropanoid metabolism. Functionally, 2-oxoglutarate (OG)- and Fe(II)-dependent dioxygenase (2OGD) involved in scopoletin and umbelliferone biosynthesis. Converts feruloyl CoA into 6'-hydroxyferuloyl CoA, and p-coumaroyl CoA into 2,4-dihydroxycinnamoyl-CoA, but has no activity toward caffeoyl-CoA. This is Bi-functional coumaroyl CoA and feruloyl CoA ortho-hydroxylase F6H2-2-1 from Ipomoea batatas (Sweet potato).